The primary structure comprises 962 residues: Protease 3 (962 aa).

A signal peptide spans Met-1–Ala-23. A Zn(2+)-binding site is contributed by His-88. Glu-91 functions as the Proton acceptor in the catalytic mechanism. Residues His-92 and Glu-169 each contribute to the Zn(2+) site.

It belongs to the peptidase M16 family. As to quaternary structure, monomer. It depends on Zn(2+) as a cofactor.

It localises to the periplasm. The catalysed reaction is Preferential cleavage of 16-Tyr-|-Leu-17 and 25-Phe-|-Tyr-26 bonds of oxidized insulin B chain. Also acts on other substrates of Mw less than 7 kDa such as insulin and glucagon.. Its function is as follows. Endopeptidase that degrades small peptides of less than 7 kDa, such as glucagon and insulin. The polypeptide is Protease 3 (ptrA) (Escherichia coli O157:H7).